The sequence spans 270 residues: Hydroxyethylthiazole kinase (270 aa).

Met47 provides a ligand contact to substrate. Arg123 and Thr169 together coordinate ATP. Gly196 contributes to the substrate binding site.

Belongs to the Thz kinase family. The cofactor is Mg(2+).

The catalysed reaction is 5-(2-hydroxyethyl)-4-methylthiazole + ATP = 4-methyl-5-(2-phosphooxyethyl)-thiazole + ADP + H(+). The protein operates within cofactor biosynthesis; thiamine diphosphate biosynthesis; 4-methyl-5-(2-phosphoethyl)-thiazole from 5-(2-hydroxyethyl)-4-methylthiazole: step 1/1. Functionally, catalyzes the phosphorylation of the hydroxyl group of 4-methyl-5-beta-hydroxyethylthiazole (THZ). This chain is Hydroxyethylthiazole kinase, found in Roseiflexus sp. (strain RS-1).